The chain runs to 204 residues: Elongation factor Ts (204 aa).

The involved in Mg(2+) ion dislocation from EF-Tu stretch occupies residues 80 to 83 (TDFV).

The protein belongs to the EF-Ts family.

Its subcellular location is the cytoplasm. In terms of biological role, associates with the EF-Tu.GDP complex and induces the exchange of GDP to GTP. It remains bound to the aminoacyl-tRNA.EF-Tu.GTP complex up to the GTP hydrolysis stage on the ribosome. The chain is Elongation factor Ts from Thermoanaerobacter sp. (strain X514).